The sequence spans 438 residues: Asparagine--tRNA ligase (438 aa).

It belongs to the class-II aminoacyl-tRNA synthetase family. In terms of assembly, homodimer.

It is found in the cytoplasm. The catalysed reaction is tRNA(Asn) + L-asparagine + ATP = L-asparaginyl-tRNA(Asn) + AMP + diphosphate + H(+). In Thermus thermophilus (strain ATCC BAA-163 / DSM 7039 / HB27), this protein is Asparagine--tRNA ligase.